The sequence spans 271 residues: Formamidopyrimidine-DNA glycosylase (271 aa).

Pro-2 serves as the catalytic Schiff-base intermediate with DNA. Glu-3 functions as the Proton donor in the catalytic mechanism. Lys-57 acts as the Proton donor; for beta-elimination activity in catalysis. The DNA site is built by His-90, Arg-109, and Arg-151. Residues 236–270 form an FPG-type zinc finger; it reads MVYGRAGEACVTCKTKLQEIRQSNRSSVFCPSCQQ. The active-site Proton donor; for delta-elimination activity is the Arg-260.

Belongs to the FPG family. As to quaternary structure, monomer. It depends on Zn(2+) as a cofactor.

It catalyses the reaction Hydrolysis of DNA containing ring-opened 7-methylguanine residues, releasing 2,6-diamino-4-hydroxy-5-(N-methyl)formamidopyrimidine.. It carries out the reaction 2'-deoxyribonucleotide-(2'-deoxyribose 5'-phosphate)-2'-deoxyribonucleotide-DNA = a 3'-end 2'-deoxyribonucleotide-(2,3-dehydro-2,3-deoxyribose 5'-phosphate)-DNA + a 5'-end 5'-phospho-2'-deoxyribonucleoside-DNA + H(+). Its function is as follows. Involved in base excision repair of DNA damaged by oxidation or by mutagenic agents. Acts as a DNA glycosylase that recognizes and removes damaged bases. Has a preference for oxidized purines, such as 7,8-dihydro-8-oxoguanine (8-oxoG). Has AP (apurinic/apyrimidinic) lyase activity and introduces nicks in the DNA strand. Cleaves the DNA backbone by beta-delta elimination to generate a single-strand break at the site of the removed base with both 3'- and 5'-phosphates. The sequence is that of Formamidopyrimidine-DNA glycosylase from Colwellia psychrerythraea (strain 34H / ATCC BAA-681) (Vibrio psychroerythus).